Here is a 278-residue protein sequence, read N- to C-terminus: Large ribosomal subunit protein uL2 (278 aa).

2 disordered regions span residues 29–53 and 223–278; these read PEKSLVRPLSKTGGRNSSGRITTRH and GVAM…GKKR. A compositionally biased stretch (basic and acidic residues) spans 255–268; it reads GRTRRPGKESDKLI. Over residues 269–278 the composition is skewed to basic residues; it reads VRRRRTGKKR.

Belongs to the universal ribosomal protein uL2 family. As to quaternary structure, part of the 50S ribosomal subunit. Forms a bridge to the 30S subunit in the 70S ribosome.

In terms of biological role, one of the primary rRNA binding proteins. Required for association of the 30S and 50S subunits to form the 70S ribosome, for tRNA binding and peptide bond formation. It has been suggested to have peptidyltransferase activity; this is somewhat controversial. Makes several contacts with the 16S rRNA in the 70S ribosome. The sequence is that of Large ribosomal subunit protein uL2 from Kineococcus radiotolerans (strain ATCC BAA-149 / DSM 14245 / SRS30216).